The chain runs to 938 residues: Isoleucine--tRNA ligase (938 aa).

A 'HIGH' region motif is present at residues 58 to 68 (PYANGSIHIGH). K183 is subject to N6-acetyllysine. L-isoleucyl-5'-AMP is bound at residue E561. The short motif at 602–606 (KMSKS) is the 'KMSKS' region element. K605 contacts ATP. Zn(2+) is bound by residues C901, C904, C921, and C924.

It belongs to the class-I aminoacyl-tRNA synthetase family. IleS type 1 subfamily. As to quaternary structure, monomer. Requires Zn(2+) as cofactor.

The protein resides in the cytoplasm. The catalysed reaction is tRNA(Ile) + L-isoleucine + ATP = L-isoleucyl-tRNA(Ile) + AMP + diphosphate. In terms of biological role, catalyzes the attachment of isoleucine to tRNA(Ile). As IleRS can inadvertently accommodate and process structurally similar amino acids such as valine, to avoid such errors it has two additional distinct tRNA(Ile)-dependent editing activities. One activity is designated as 'pretransfer' editing and involves the hydrolysis of activated Val-AMP. The other activity is designated 'posttransfer' editing and involves deacylation of mischarged Val-tRNA(Ile). This Escherichia coli (strain 55989 / EAEC) protein is Isoleucine--tRNA ligase.